Here is a 38-residue protein sequence, read N- to C-terminus: Beta-defensin 8 (38 aa).

3 disulfide bridges follow: C7/C36, C14/C29, and C19/C37.

This sequence belongs to the beta-defensin family. Neutrophilic granules.

The protein resides in the secreted. Functionally, has bactericidal activity. Active against E.coli ML35 and S.aureus 502A. The chain is Beta-defensin 8 (DEFB8) from Bos taurus (Bovine).